The sequence spans 289 residues: Phosphatidylglycerol--prolipoprotein diacylglyceryl transferase (289 aa).

3 helical membrane passes run 24-44, 70-90, and 111-131; these read GIAI…VYLL, GGVL…DWFL, and GING…LWLF. R158 is a binding site for a 1,2-diacyl-sn-glycero-3-phospho-(1'-sn-glycerol). 2 helical membrane-spanning segments follow: residues 219 to 239 and 253 to 273; these read GYLS…IEFF and FSMG…ILVW.

It belongs to the Lgt family.

Its subcellular location is the cell inner membrane. The enzyme catalyses L-cysteinyl-[prolipoprotein] + a 1,2-diacyl-sn-glycero-3-phospho-(1'-sn-glycerol) = an S-1,2-diacyl-sn-glyceryl-L-cysteinyl-[prolipoprotein] + sn-glycerol 1-phosphate + H(+). Its pathway is protein modification; lipoprotein biosynthesis (diacylglyceryl transfer). Catalyzes the transfer of the diacylglyceryl group from phosphatidylglycerol to the sulfhydryl group of the N-terminal cysteine of a prolipoprotein, the first step in the formation of mature lipoproteins. The polypeptide is Phosphatidylglycerol--prolipoprotein diacylglyceryl transferase (Chlorobaculum tepidum (strain ATCC 49652 / DSM 12025 / NBRC 103806 / TLS) (Chlorobium tepidum)).